Here is a 124-residue protein sequence, read N- to C-terminus: Small ribosomal subunit protein uS13 (124 aa).

The segment at 95-124 (GLPVRGQRTHTNARTRKGPRRSVMGKRKKA) is disordered.

The protein belongs to the universal ribosomal protein uS13 family. As to quaternary structure, part of the 30S ribosomal subunit. Forms a loose heterodimer with protein S19. Forms two bridges to the 50S subunit in the 70S ribosome.

Functionally, located at the top of the head of the 30S subunit, it contacts several helices of the 16S rRNA. In the 70S ribosome it contacts the 23S rRNA (bridge B1a) and protein L5 of the 50S subunit (bridge B1b), connecting the 2 subunits; these bridges are implicated in subunit movement. Contacts the tRNAs in the A and P-sites. The protein is Small ribosomal subunit protein uS13 of Syntrophobacter fumaroxidans (strain DSM 10017 / MPOB).